Here is a 664-residue protein sequence, read N- to C-terminus: Trifunctional UDP-glucose 4,6-dehydratase/UDP-4-keto-6-deoxy-D-glucose 3,5-epimerase/UDP-4-keto-L-rhamnose-reductase RHM3 (664 aa).

13–19 (GAAGFIA) is an NAD(+) binding site. Thr132 lines the substrate pocket. Catalysis depends on Asp133, which acts as the Proton donor. Active-site proton acceptor residues include Glu134 and Tyr159. 386-392 (GKTGWLG) is an NADP(+) binding site.

This sequence in the N-terminal section; belongs to the NAD(P)-dependent epimerase/dehydratase family. dTDP-glucose dehydratase subfamily. The protein in the C-terminal section; belongs to the dTDP-4-dehydrorhamnose reductase family. NAD(+) serves as cofactor. It depends on NADP(+) as a cofactor. In terms of tissue distribution, expressed in roots, stems, seedlings, and siliques. Lower expression in inflorescence tips, and leaves.

The enzyme catalyses UDP-alpha-D-glucose = UDP-4-dehydro-6-deoxy-alpha-D-glucose + H2O. Its pathway is carbohydrate biosynthesis. In terms of biological role, trifunctional enzyme involved in UDP-beta-L-rhamnose biosynthesis, a precursor of the primary cell wall components rhamnogalacturonan I (RG-I) and rhamnogalacturonan II (RG-II). Catalyzes the dehydration of UDP-glucose to form UDP-4-dehydro-6-deoxy-D-glucose followed by the epimerization of the C3' and C5' positions of UDP-4-dehydro-6-deoxy-D-glucose to form UDP-4-keto-beta-L-rhamnose and the reduction of UDP-4-keto-beta-L-rhamnose to yield UDP-beta-L-rhamnose. In Arabidopsis thaliana (Mouse-ear cress), this protein is Trifunctional UDP-glucose 4,6-dehydratase/UDP-4-keto-6-deoxy-D-glucose 3,5-epimerase/UDP-4-keto-L-rhamnose-reductase RHM3.